We begin with the raw amino-acid sequence, 307 residues long: UDP-3-O-acyl-N-acetylglucosamine deacetylase (307 aa).

Residues H78, H237, and D241 each contribute to the Zn(2+) site. Residue H264 is the Proton donor of the active site.

Belongs to the LpxC family. Zn(2+) serves as cofactor.

The catalysed reaction is a UDP-3-O-[(3R)-3-hydroxyacyl]-N-acetyl-alpha-D-glucosamine + H2O = a UDP-3-O-[(3R)-3-hydroxyacyl]-alpha-D-glucosamine + acetate. It functions in the pathway glycolipid biosynthesis; lipid IV(A) biosynthesis; lipid IV(A) from (3R)-3-hydroxytetradecanoyl-[acyl-carrier-protein] and UDP-N-acetyl-alpha-D-glucosamine: step 2/6. In terms of biological role, catalyzes the hydrolysis of UDP-3-O-myristoyl-N-acetylglucosamine to form UDP-3-O-myristoylglucosamine and acetate, the committed step in lipid A biosynthesis. In Azoarcus sp. (strain BH72), this protein is UDP-3-O-acyl-N-acetylglucosamine deacetylase.